Here is a 485-residue protein sequence, read N- to C-terminus: Maturase K (485 aa).

Belongs to the intron maturase 2 family. MatK subfamily.

Its subcellular location is the plastid. It is found in the chloroplast. Its function is as follows. Usually encoded in the trnK tRNA gene intron. Probably assists in splicing its own and other chloroplast group II introns. The protein is Maturase K of Malus domestica (Apple).